Consider the following 102-residue polypeptide: Small ribosomal subunit protein uS10 (102 aa).

This sequence belongs to the universal ribosomal protein uS10 family. Part of the 30S ribosomal subunit.

Functionally, involved in the binding of tRNA to the ribosomes. The polypeptide is Small ribosomal subunit protein uS10 (Leifsonia xyli subsp. xyli (strain CTCB07)).